The following is a 219-amino-acid chain: Ribose-5-phosphate isomerase A (219 aa).

Residues 28–31 (TGST), 81–84 (DGAD), and 94–97 (KGGG) contribute to the substrate site. The active-site Proton acceptor is Glu103. Lys121 is a substrate binding site.

It belongs to the ribose 5-phosphate isomerase family. As to quaternary structure, homodimer.

The enzyme catalyses aldehydo-D-ribose 5-phosphate = D-ribulose 5-phosphate. It participates in carbohydrate degradation; pentose phosphate pathway; D-ribose 5-phosphate from D-ribulose 5-phosphate (non-oxidative stage): step 1/1. Its function is as follows. Catalyzes the reversible conversion of ribose-5-phosphate to ribulose 5-phosphate. The chain is Ribose-5-phosphate isomerase A from Shewanella sp. (strain ANA-3).